The following is a 308-amino-acid chain: Ornithine carbamoyltransferase (308 aa).

Carbamoyl phosphate is bound by residues 56-59 (STRT), Q83, R107, and 134-137 (HPCQ). Residues N165, D225, and 229-230 (SM) each bind L-ornithine. Carbamoyl phosphate contacts are provided by residues 266–267 (CL) and R294.

It belongs to the aspartate/ornithine carbamoyltransferase superfamily. OTCase family.

It localises to the cytoplasm. The catalysed reaction is carbamoyl phosphate + L-ornithine = L-citrulline + phosphate + H(+). It participates in amino-acid biosynthesis; L-arginine biosynthesis; L-arginine from L-ornithine and carbamoyl phosphate: step 1/3. Its function is as follows. Reversibly catalyzes the transfer of the carbamoyl group from carbamoyl phosphate (CP) to the N(epsilon) atom of ornithine (ORN) to produce L-citrulline. The protein is Ornithine carbamoyltransferase of Cereibacter sphaeroides (strain ATCC 17029 / ATH 2.4.9) (Rhodobacter sphaeroides).